Consider the following 101-residue polypeptide: Ubiquitin-related modifier 1 (101 aa).

1-thioglycine is present on Gly101. Gly101 participates in a covalent cross-link: Glycyl lysine isopeptide (Gly-Lys) (interchain with K-? in acceptor proteins).

This sequence belongs to the URM1 family. C-terminal thiocarboxylation occurs in 2 steps, it is first acyl-adenylated (-COAMP) via the hesA/moeB/thiF part of the MOCS3 homolog, then thiocarboxylated (-COSH) via the rhodanese domain of the MOCS3 homolog.

The protein localises to the cytoplasm. It participates in tRNA modification; 5-methoxycarbonylmethyl-2-thiouridine-tRNA biosynthesis. Acts as a sulfur carrier required for 2-thiolation of mcm(5)S(2)U at tRNA wobble positions of cytosolic tRNA(Lys), tRNA(Glu) and tRNA(Gln). Serves as sulfur donor in tRNA 2-thiolation reaction by being thiocarboxylated (-COSH) at its C-terminus by MOCS3. The sulfur is then transferred to tRNA to form 2-thiolation of mcm(5)S(2)U. Also acts as a ubiquitin-like protein (UBL) that is covalently conjugated via an isopeptide bond to lysine residues of target proteins. The thiocarboxylated form serves as substrate for conjugation and oxidative stress specifically induces the formation of UBL-protein conjugates. This chain is Ubiquitin-related modifier 1, found in Gallus gallus (Chicken).